Consider the following 557-residue polypeptide: Ribonuclease J 2 (557 aa).

Zn(2+) is bound by residues His76, His78, His144, and Glu166. 366–370 (HASSH) serves as a coordination point for substrate.

Belongs to the metallo-beta-lactamase superfamily. RNA-metabolizing metallo-beta-lactamase-like family. Bacterial RNase J subfamily. As to quaternary structure, homodimer. Component of a possible RNA degradosome complex composed of cshA, eno, pfkA, pnp, rnjA, rnjB, rnpA and rny. Interacts specifically with RNase J1. Zn(2+) serves as cofactor.

The protein localises to the cytoplasm. An RNase that has 5'-3' exonuclease and endonuclease activity, with the exonuclease activity probably being most important in vivo. Involved in maturation of 16S rRNA, rnpB (the RNA component of RNase P) maturation and degradation, and mRNA maturation and/or decay. This subunit probably plays a structural rather than enzymatic role as mutation of its putative active site gives no phenotype, and its deletion is partially complemented by inactive RNase J1. The protein is Ribonuclease J 2 of Staphylococcus aureus (strain NCTC 8325 / PS 47).